The primary structure comprises 282 residues: ATP phosphoribosyltransferase (282 aa).

It belongs to the ATP phosphoribosyltransferase family. Long subfamily. Mg(2+) is required as a cofactor.

The protein localises to the cytoplasm. The catalysed reaction is 1-(5-phospho-beta-D-ribosyl)-ATP + diphosphate = 5-phospho-alpha-D-ribose 1-diphosphate + ATP. It participates in amino-acid biosynthesis; L-histidine biosynthesis; L-histidine from 5-phospho-alpha-D-ribose 1-diphosphate: step 1/9. Feedback inhibited by histidine. Catalyzes the condensation of ATP and 5-phosphoribose 1-diphosphate to form N'-(5'-phosphoribosyl)-ATP (PR-ATP). Has a crucial role in the pathway because the rate of histidine biosynthesis seems to be controlled primarily by regulation of HisG enzymatic activity. This chain is ATP phosphoribosyltransferase, found in Micrococcus luteus (strain ATCC 4698 / DSM 20030 / JCM 1464 / CCM 169 / CCUG 5858 / IAM 1056 / NBRC 3333 / NCIMB 9278 / NCTC 2665 / VKM Ac-2230) (Micrococcus lysodeikticus).